A 1462-amino-acid polypeptide reads, in one-letter code: Trifunctional nucleotide phosphoesterase protein YfkN (1462 aa).

The signal sequence occupies residues 1–35; the sequence is MRIQKRRTHVENILRILLPPIMILSLILPTPPIHA. Residues 36–623 are 2',3'-cyclic nucleotide 2'-phosphodiesterase/3'-nucleotidase; that stretch reads EESAAPQVHL…GTNLTFESSL (588 aa). A divalent metal cation is bound by residues Asp52, His54, Asp97, Asn141, His249, His282, and His284. Residues Tyr458 and 561 to 567 each bind a ribonucleoside 3'-phosphate; that span reads YRASGGG. The interval 624–1427 is 5'-nucleotidase; that stretch reads LAKPFADKAD…GPAGGLLPDT (804 aa). 7 residues coordinate a divalent metal cation: Asp676, His678, Asp708, Asn740, His872, His895, and His897. A ribonucleoside 5'-phosphate contacts are provided by residues Phe1047 and 1127–1133; that span reads FVGAGGD. The segment at 1350–1422 is disordered; sequence ILNSGSNNKP…GSGTDGPAGG (73 aa). Gly residues predominate over residues 1405–1421; it reads GSGGNGSGGSGTDGPAG. The short motif at 1424 to 1428 is the LPXTG sorting signal element; sequence LPDTA. At Thr1427 the chain carries Pentaglycyl murein peptidoglycan amidated threonine. A propeptide spans 1428–1462 (removed by sortase); sequence ATSMYSILLAGFLISALGTAMYLHQRRKQNRANQA.

This sequence belongs to the 5'-nucleotidase family. The cofactor is a divalent metal cation.

It localises to the secreted. Its subcellular location is the cell wall. It catalyses the reaction a nucleoside 2',3'-cyclic phosphate + H2O = a nucleoside 3'-phosphate + H(+). The enzyme catalyses a ribonucleoside 3'-phosphate + H2O = a ribonucleoside + phosphate. It carries out the reaction a ribonucleoside 5'-phosphate + H2O = a ribonucleoside + phosphate. In terms of biological role, catalyzes the release of inorganic phosphate from 2',3'-cyclic nucleotides through consecutive 2',3'-phosphodiesterase and 3'- (or 2') nucleotidase activities. Also possesses a 5'-nucleotidase activity. Does not catalyze the release of inorganic phosphate from 3',5'-cyclic nucleotides. Probably plays a role in the cellular reprocessing of nucleotides present in the medium, under conditions of phosphate shortage. The chain is Trifunctional nucleotide phosphoesterase protein YfkN (yfkN) from Bacillus subtilis (strain 168).